The following is a 210-amino-acid chain: Probable membrane protein MT1774 (210 aa).

A run of 2 helical transmembrane segments spans residues 43–63 (AVVMLLAVTVSLLTIPFAAAA) and 165–185 (ALAALGLWLSVAAVAGALLAL).

The protein localises to the cell membrane. This Mycobacterium tuberculosis (strain CDC 1551 / Oshkosh) protein is Probable membrane protein MT1774.